Here is a 472-residue protein sequence, read N- to C-terminus: Cysteine--tRNA ligase (472 aa).

C28 provides a ligand contact to Zn(2+). The 'HIGH' region motif lies at 30-40 (PTVYNYIHIGN). C212, H237, and E241 together coordinate Zn(2+). Positions 271–275 (KMSKS) match the 'KMSKS' region motif. ATP is bound at residue K274.

This sequence belongs to the class-I aminoacyl-tRNA synthetase family. Monomer. Zn(2+) is required as a cofactor.

Its subcellular location is the cytoplasm. It catalyses the reaction tRNA(Cys) + L-cysteine + ATP = L-cysteinyl-tRNA(Cys) + AMP + diphosphate. The chain is Cysteine--tRNA ligase from Limosilactobacillus fermentum (strain NBRC 3956 / LMG 18251) (Lactobacillus fermentum).